The chain runs to 122 residues: Large ribosomal subunit protein uL14 (122 aa).

It belongs to the universal ribosomal protein uL14 family. In terms of assembly, part of the 50S ribosomal subunit. Forms a cluster with proteins L3 and L19. In the 70S ribosome, L14 and L19 interact and together make contacts with the 16S rRNA in bridges B5 and B8.

Functionally, binds to 23S rRNA. Forms part of two intersubunit bridges in the 70S ribosome. This is Large ribosomal subunit protein uL14 from Syntrophobacter fumaroxidans (strain DSM 10017 / MPOB).